The primary structure comprises 318 residues: Apo-salmochelin esterase (318 aa).

Residues 13 to 32 (KAIFFHLSCLTLICSAQVYA) form a helical membrane-spanning segment. Catalysis depends on residues serine 189 and histidine 287.

It belongs to the esterase D family. Monomer.

The protein resides in the cell inner membrane. It catalyses the reaction enterobactin + H2O = N-(2,3-dihydroxybenzoyl)-L-serine trimer. The enzyme catalyses monoglucosyl-enterobactin + H2O = [N-(2,3-dihydroxybenzoyl)-L-seryl]2-N-(C-5-[deoxy-beta-D-glucosyl]-2,3-dihydroxybenzoyl)-L-serine + H(+). It carries out the reaction diglucosyl-enterobactin + H2O = N-(2,3-dihydroxybenzoyl)-L-seryl-[N-(C-5-[deoxy-beta-D-glucosyl]-2,3-dihydroxybenzoyl)-L-serine]2 + H(+). The catalysed reaction is triglucosyl-enterobactin + H2O = [N-(C-5-[deoxy-beta-D-glucosyl]-2,3-dihydroxybenzoyl)-L-serine]3 + H(+). Catalyzes the hydrolysis of both the apo and Fe3(+)-bound forms of enterobactin (Ent), monoglucosyl-C-Ent (MGE), diglucosyl-C-Ent (DGE) and triglucosyl-C-Ent (TGE). It prefers apo siderophores as substrates and hydrolyzes the Fe3(+)-bound siderophores very inefficiently. Tends to hydrolyze the trilactone just once to produce linearized trimers. May hydrolyze and linearize some or all of apo enterobactins while they are being exported. The sequence is that of Apo-salmochelin esterase from Escherichia coli O6:H1 (strain CFT073 / ATCC 700928 / UPEC).